A 328-amino-acid polypeptide reads, in one-letter code: MHTLIERLEKVTNNKELEEVRLNALGKKGVFADKFNQLKNLNGGEKNAFAKEIHHYKQAFEKAFELKKKAIIELELEERLKKEKIDVSLFNTTKTSSSHPLNYTKNKIIEFFTPLGYKLEIGSLVEDDFHNFSALNLPPYHPARDMQDTFYFKDHKLLRTHTSPVQIHTMQEQTPPIKMICLGETFRRDYDLTHTPMFHQIEGLVVDQKGNIHFTHLKGVIEDFLHYFFGGVKLRWRSSFFPFTEPSAEVDISCVFCKQEGCRVCSHMGWLEVLGCGMVNNAVFEAIGYKGMSGFAFGMGIERLAMLTCQINDLRSFFETDLRVLEGF.

E245 is a Mg(2+) binding site.

This sequence belongs to the class-II aminoacyl-tRNA synthetase family. Phe-tRNA synthetase alpha subunit type 1 subfamily. As to quaternary structure, tetramer of two alpha and two beta subunits. The cofactor is Mg(2+).

Its subcellular location is the cytoplasm. The catalysed reaction is tRNA(Phe) + L-phenylalanine + ATP = L-phenylalanyl-tRNA(Phe) + AMP + diphosphate + H(+). The sequence is that of Phenylalanine--tRNA ligase alpha subunit from Helicobacter acinonychis (strain Sheeba).